Reading from the N-terminus, the 522-residue chain is Protein nucleotidyltransferase YdiU (522 aa).

Residues G109, G111, R112, K132, D144, G145, R195, and R202 each coordinate ATP. The active-site Proton acceptor is D271. The Mg(2+) site is built by N272 and D281. D281 lines the ATP pocket.

This sequence belongs to the SELO family. Requires Mg(2+) as cofactor. Mn(2+) is required as a cofactor.

It catalyses the reaction L-seryl-[protein] + ATP = 3-O-(5'-adenylyl)-L-seryl-[protein] + diphosphate. It carries out the reaction L-threonyl-[protein] + ATP = 3-O-(5'-adenylyl)-L-threonyl-[protein] + diphosphate. The enzyme catalyses L-tyrosyl-[protein] + ATP = O-(5'-adenylyl)-L-tyrosyl-[protein] + diphosphate. The catalysed reaction is L-histidyl-[protein] + UTP = N(tele)-(5'-uridylyl)-L-histidyl-[protein] + diphosphate. It catalyses the reaction L-seryl-[protein] + UTP = O-(5'-uridylyl)-L-seryl-[protein] + diphosphate. It carries out the reaction L-tyrosyl-[protein] + UTP = O-(5'-uridylyl)-L-tyrosyl-[protein] + diphosphate. Functionally, nucleotidyltransferase involved in the post-translational modification of proteins. It can catalyze the addition of adenosine monophosphate (AMP) or uridine monophosphate (UMP) to a protein, resulting in modifications known as AMPylation and UMPylation. In Burkholderia cenocepacia (strain HI2424), this protein is Protein nucleotidyltransferase YdiU.